The sequence spans 373 residues: NAD(P)H-quinone oxidoreductase subunit 1 (373 aa).

9 helical membrane-spanning segments follow: residues 29–49 (LWVPLPMLLMVIAATLGVMVM), 64–84 (IGPNMAGPQGVLIPIADGIKL), 98–118 (VLFTLGPILVFLPVFLCYLVV), 129–149 (IAIGVFFLIATSSVQPIGLLM), 177–197 (LALSVLAVVLMSNGLDTVGIV), 202–222 (GLGILSWNVWRQPIGFVIFLI), 267–287 (LLASLIAAVLYLGGWSFVVPV), 309–329 (VLGILMTMVKAFIFVFLAILL), and 348–368 (FLLPVSFVNLLLTAALKLAFP).

The protein belongs to the complex I subunit 1 family. In terms of assembly, NDH-1 is composed of at least 11 different subunits.

The protein localises to the cellular thylakoid membrane. The catalysed reaction is a plastoquinone + NADH + (n+1) H(+)(in) = a plastoquinol + NAD(+) + n H(+)(out). It carries out the reaction a plastoquinone + NADPH + (n+1) H(+)(in) = a plastoquinol + NADP(+) + n H(+)(out). NDH-1 shuttles electrons from an unknown electron donor, via FMN and iron-sulfur (Fe-S) centers, to quinones in the respiratory and/or the photosynthetic chain. The immediate electron acceptor for the enzyme in this species is believed to be plastoquinone. Couples the redox reaction to proton translocation, and thus conserves the redox energy in a proton gradient. The chain is NAD(P)H-quinone oxidoreductase subunit 1 from Synechococcus sp. (strain JA-3-3Ab) (Cyanobacteria bacterium Yellowstone A-Prime).